The following is a 1111-amino-acid chain: MKPFYSMSLVLFLVITLLPKPMFPQVATGTTGNVIRVGFIHCRDFQSAPITVGYRTSAAAASIAVDRLKRENLMSGWEFNFTIEFDDCVESEAAGMTVDLIEKHNVDVIIGPTMNQPTLAAFIVSNYFNRPIIAWGLVNAAQLDDFERFPNAGILSAGQRSLGVAIRAVLKRYEWSQFVYAYFTEEDTEKCVTMRNDLQQVVSYFGDIILAYSIQVADISNDGMIEALKKIQSRGRIIVTCMKDGIGLRRKWLLAAEEAGMIGDEYVYVFSDIKSKGYVVPLLGGGERPSWILSTGSDENDTRALKAFKQSIFICDMMGQGSIATNYTIFGQEIIARMKEAPYFCTKDCEGENFTVAATYAGQLHDAVYAYGVALDKMLKAGQIAQYRNATAFMRYFPQSFIGMSGNVTINEKGTRNPTLFLLALDENNNNTRMATIYVENMSATFNALYSDEGVMWASRKNNARPVDVPLCGFTGNLCPKSFVDEYLIWVIVAIVVLFLAITAAACGIYFSIQARRQEIERLNRLWQIPFIHLHQINSKQKGKGEHSVRSLQSGTSTLSSRTTVSFKTESRNFLFFSLQRESDYEPVVAKKHAYRPRLDDDKCTFMRSLRNLDQDNLNRFIGLCLDGPQMLSVWRFCSRGSIADVILKATIQMDNFFIYSLIKDMVHGLVFLHGSMVGYHGMLTSKCCLIDDRWQVKISNYGLQDLRSPEMYEKKDLLWSAPELLRAEDIKGSKEGDVYSLGIICAELITRKGVFNMEDRKEDPEEIIYLLKKGGLKSPRPDLEYDHTIEINPALLHLVRDCFTERPSERPSIETVRSQLRGMNSSRNDNLMDHVFNMLESYASSLEEEVSERTKELVEEKKKSDVLLYRMLPKTVADKLKLGQTVEPETFEQVTIFFSDVVQFTTLASKCTPLQVVNLLNDLYTIFDGIIEKHDVYKVETIGDGYLCVSGLPHRNGNEHVRQIALMSLAFLSSLQFFRVPHLPSERINLRIGMNCGSVVAGVVGLTMPRFCLFGDAVNTASRMESNGKPGKIHVSAEANRMLHLVGGFDTESRGEVIIKGKGVMETFWLTGQGTGAVSGARHVSAKKVSKKMDEIHRQETLKSDEQLSD.

The N-terminal stretch at 1–24 is a signal peptide; the sequence is MKPFYSMSLVLFLVITLLPKPMFP. The Extracellular segment spans residues 25–488; sequence QVATGTTGNV…CPKSFVDEYL (464 aa). 8 N-linked (GlcNAc...) asparagine glycosylation sites follow: N80, N300, N326, N353, N389, N407, N430, and N441. Residues 489 to 509 traverse the membrane as a helical segment; the sequence is IWVIVAIVVLFLAITAAACGI. The Cytoplasmic segment spans residues 510–1111; it reads YFSIQARRQE…TLKSDEQLSD (602 aa). A Protein kinase domain is found at 536–838; sequence QINSKQKGKG…NDNLMDHVFN (303 aa). Residues 542–550 and K568 each bind ATP; that span reads KGKGEHSVR. The Guanylate cyclase domain occupies 896 to 1026; that stretch reads TIFFSDVVQF…DAVNTASRME (131 aa).

Belongs to the adenylyl cyclase class-4/guanylyl cyclase family. As to expression, expressed asymmetrically in ASE left (ASEL) sensory neuron. Expressed in excretory canal cell.

It is found in the cell membrane. It carries out the reaction GTP = 3',5'-cyclic GMP + diphosphate. Guanylate cyclase involved in the production of the second messenger cGMP. Unlike other guanylate cyclases expressed in ASE neurons, may not play a role in chemotaxis responses toward salt ions in ASEL (ASE left) sensory neurons. The protein is Receptor-type guanylate cyclase gcy-7 of Caenorhabditis elegans.